The following is a 323-amino-acid chain: MPVHSRGDKKETNHHDEMEVDYAENEGSSSEDEDTESSSVSEDGDSSEMDDEDCERRRMECLDEMSNLEKQFTDLKDQLYKERLSQVDAKLQEVIAGKAPEYLEPLATLQENMQIRTKVAGIYRELCLESVKNKYECEIQASRQHCESEKLLLYDTVQSELEEKIRRLEEDRHSIDITSELWNDELQSRKKRKDPFSPDKKKPVVVSGPYIVYMLQDLDILEDWTTIRKAMATLGPHRVKTEPPVKLEKHLHSARSEEGRLYYDGEWYIRGQTICIDKKDECPTSAVITTINHDEVWFKRPDGSKSKLYISQLQKGKYSIKHS.

The span at 1–17 (MPVHSRGDKKETNHHDE) shows a compositional bias: basic and acidic residues. The disordered stretch occupies residues 1 to 56 (MPVHSRGDKKETNHHDEMEVDYAENEGSSSEDEDTESSSVSEDGDSSEMDDEDCER). The span at 18-53 (MEVDYAENEGSSSEDEDTESSSVSEDGDSSEMDDED) shows a compositional bias: acidic residues. Coiled coils occupy residues 52–84 (EDCERRRMECLDEMSNLEKQFTDLKDQLYKERL) and 149–180 (EKLLLYDTVQSELEEKIRRLEEDRHSIDITSE). Phosphoserine is present on S197. Residues K240 and K246 each participate in a glycyl lysine isopeptide (Lys-Gly) (interchain with G-Cter in SUMO2) cross-link.

This sequence belongs to the BRMS1 family. As to quaternary structure, component of the Sin3/HDAC1 corepressor complex at least composed of BRMS1, BRMS1L and ING2/ING1L. Interacts with HDAC and SIN3A.

The protein localises to the nucleus. Functionally, involved in the histone deacetylase (HDAC1)-dependent transcriptional repression activity. When overexpressed in lung cancer cell line that lacks p53/TP53 expression, inhibits cell growth. The polypeptide is Breast cancer metastasis-suppressor 1-like protein (BRMS1L) (Bos taurus (Bovine)).